A 431-amino-acid chain; its full sequence is Teosinte glume architecture 1 (431 aa).

Disordered stretches follow at residues 18 to 55 (QDHA…GAPA) and 68 to 102 (ECEP…QQCP). Positions 21-41 (AAAAPSSGGHAANAAAAGTGT) are enriched in low complexity. The SBP-type zinc finger occupies 101–178 (CPSCAVDGCR…DGHNRRRRKP (78 aa)). Residues Cys104, Cys109, Cys126, His129, Cys145, Cys148, His152, and Cys164 each contribute to the Zn(2+) site. The span at 408-419 (GGGSGGGEGSSD) shows a compositional bias: gly residues. Positions 408 to 431 (GGGSGGGEGSSDGGTSSSMPFSWQ) are disordered.

As to quaternary structure, monomer and homodimer. As to expression, strongly expressed in immature ears and weakly in husks. Found in the inflorescence meristem of the developing ear, in the spikelet pair primordia, the glume primordia, the cupule forming region and other floral organs. Not detected in other tissues.

Its function is as follows. SBP transcriptional regulator probably involved in the domestication of maize. Acts as a transcriptional repressor binding to a 5'-GTAC-3' motif. May repress the growth of lateral branches in length and numbers. This is Teosinte glume architecture 1 from Zea mays (Maize).